We begin with the raw amino-acid sequence, 158 residues long: NAD(P)H-quinone oxidoreductase subunit J, chloroplastic (158 aa).

This sequence belongs to the complex I 30 kDa subunit family. In terms of assembly, NDH is composed of at least 16 different subunits, 5 of which are encoded in the nucleus.

It is found in the plastid. It localises to the chloroplast thylakoid membrane. The enzyme catalyses a plastoquinone + NADH + (n+1) H(+)(in) = a plastoquinol + NAD(+) + n H(+)(out). It catalyses the reaction a plastoquinone + NADPH + (n+1) H(+)(in) = a plastoquinol + NADP(+) + n H(+)(out). Its function is as follows. NDH shuttles electrons from NAD(P)H:plastoquinone, via FMN and iron-sulfur (Fe-S) centers, to quinones in the photosynthetic chain and possibly in a chloroplast respiratory chain. The immediate electron acceptor for the enzyme in this species is believed to be plastoquinone. Couples the redox reaction to proton translocation, and thus conserves the redox energy in a proton gradient. The polypeptide is NAD(P)H-quinone oxidoreductase subunit J, chloroplastic (Chloranthus spicatus (Chulantree)).